Here is a 228-residue protein sequence, read N- to C-terminus: tRNA (guanine-N(1)-)-methyltransferase (228 aa).

S-adenosyl-L-methionine-binding positions include Gly111 and 130-135 (IGDFVL).

It belongs to the RNA methyltransferase TrmD family. In terms of assembly, homodimer.

Its subcellular location is the cytoplasm. The catalysed reaction is guanosine(37) in tRNA + S-adenosyl-L-methionine = N(1)-methylguanosine(37) in tRNA + S-adenosyl-L-homocysteine + H(+). Functionally, specifically methylates guanosine-37 in various tRNAs. This Ureaplasma urealyticum serovar 10 (strain ATCC 33699 / Western) protein is tRNA (guanine-N(1)-)-methyltransferase.